The following is a 351-amino-acid chain: F-box protein At1g47810 (351 aa).

Residues leucine 8–phenylalanine 54 enclose the F-box domain.

In Arabidopsis thaliana (Mouse-ear cress), this protein is F-box protein At1g47810.